Consider the following 213-residue polypeptide: 3-demethoxyubiquinol 3-hydroxylase (213 aa).

Fe cation contacts are provided by E62, E92, H95, E144, E176, and H179.

It belongs to the COQ7 family. Fe cation is required as a cofactor.

The protein localises to the cell membrane. The catalysed reaction is a 5-methoxy-2-methyl-3-(all-trans-polyprenyl)benzene-1,4-diol + AH2 + O2 = a 3-demethylubiquinol + A + H2O. Its pathway is cofactor biosynthesis; ubiquinone biosynthesis. In terms of biological role, catalyzes the hydroxylation of 2-nonaprenyl-3-methyl-6-methoxy-1,4-benzoquinol during ubiquinone biosynthesis. This Legionella pneumophila (strain Paris) protein is 3-demethoxyubiquinol 3-hydroxylase.